A 591-amino-acid polypeptide reads, in one-letter code: NADP-dependent malic enzyme (591 aa).

The active-site Proton donor is the Tyr-139. Arg-192 lines the NAD(+) pocket. Lys-210 serves as the catalytic Proton acceptor. Glu-282, Asp-283, and Asp-306 together coordinate a divalent metal cation. An NAD(+)-binding site is contributed by Asp-306. 335–351 (LFLGAGEAGTGIAELIA) is an NADP(+) binding site. Asn-447 is an NAD(+) binding site.

This sequence belongs to the malic enzymes family. In terms of assembly, homotetramer. Mg(2+) is required as a cofactor. It depends on Mn(2+) as a cofactor.

The protein localises to the cytoplasm. The enzyme catalyses (S)-malate + NADP(+) = pyruvate + CO2 + NADPH. It carries out the reaction oxaloacetate + H(+) = pyruvate + CO2. In Vitis vinifera (Grape), this protein is NADP-dependent malic enzyme.